The sequence spans 368 residues: Protein trichome birefringence-like 43 (368 aa).

The chain crosses the membrane as a helical; Signal-anchor for type II membrane protein span at residues 9 to 25 (GVVSVMVLMILVLLKQI). Positions 117–119 (GDS) match the GDS motif motif. The DCXHWCLPGXXDXWN motif motif lies at 344-358 (DCSHWCLSGVPDSWN).

The protein belongs to the PC-esterase family. TBL subfamily.

The protein localises to the membrane. In terms of biological role, may act as a bridging protein that binds pectin and other cell wall polysaccharides. Probably involved in maintaining esterification of pectins. May be involved in the specific O-acetylation of cell wall polymers. The polypeptide is Protein trichome birefringence-like 43 (TBL43) (Arabidopsis thaliana (Mouse-ear cress)).